The following is a 383-amino-acid chain: Cytochrome b (383 aa).

4 helical membrane-spanning segments follow: residues 32–52 (VGSLLGLCLVMQMASGMFLAM), 76–98 (WLMRYIHANGASFFFMCLYLHMG), 113–133 (VWSMGVMMFMLTMATAFMGYC), and 179–199 (FFALHYLLPFILAALVVMHFM). Heme b is bound by residues His82 and His96. Heme b-binding residues include His183 and His197. An a ubiquinone-binding site is contributed by His202. 4 helical membrane passes run 225–245 (FVFKDLMTVFVFILMFSLFVF), 289–309 (LGGVMAMFAALLMLLMLPMTD), 321–341 (LSKLSFYLFLFNFFLLMNMGQ), and 348–368 (FIELGQFATVYYFSYFLMLVP).

The protein belongs to the cytochrome b family. In terms of assembly, fungal cytochrome b-c1 complex contains 10 subunits; 3 respiratory subunits, 2 core proteins and 5 low-molecular weight proteins. Cytochrome b-c1 complex is a homodimer. Requires heme b as cofactor.

The protein localises to the mitochondrion inner membrane. In terms of biological role, component of the ubiquinol-cytochrome c reductase complex (complex III or cytochrome b-c1 complex) that is part of the mitochondrial respiratory chain. The b-c1 complex mediates electron transfer from ubiquinol to cytochrome c. Contributes to the generation of a proton gradient across the mitochondrial membrane that is then used for ATP synthesis. In Debaryomyces hansenii (strain ATCC 36239 / CBS 767 / BCRC 21394 / JCM 1990 / NBRC 0083 / IGC 2968) (Yeast), this protein is Cytochrome b (COB).